A 476-amino-acid polypeptide reads, in one-letter code: Bifunctional protein HldE (476 aa).

The ribokinase stretch occupies residues 1–319 (MKISLPAFEK…AALNLSHGES (319 aa)). 195-198 (NMSE) provides a ligand contact to ATP. Aspartate 264 is an active-site residue. The interval 345-476 (MTNGCFDILH…AIIENIMAKQ (132 aa)) is cytidylyltransferase.

In the N-terminal section; belongs to the carbohydrate kinase PfkB family. The protein in the C-terminal section; belongs to the cytidylyltransferase family. Homodimer.

It carries out the reaction D-glycero-beta-D-manno-heptose 7-phosphate + ATP = D-glycero-beta-D-manno-heptose 1,7-bisphosphate + ADP + H(+). The enzyme catalyses D-glycero-beta-D-manno-heptose 1-phosphate + ATP + H(+) = ADP-D-glycero-beta-D-manno-heptose + diphosphate. It participates in nucleotide-sugar biosynthesis; ADP-L-glycero-beta-D-manno-heptose biosynthesis; ADP-L-glycero-beta-D-manno-heptose from D-glycero-beta-D-manno-heptose 7-phosphate: step 1/4. The protein operates within nucleotide-sugar biosynthesis; ADP-L-glycero-beta-D-manno-heptose biosynthesis; ADP-L-glycero-beta-D-manno-heptose from D-glycero-beta-D-manno-heptose 7-phosphate: step 3/4. Catalyzes the phosphorylation of D-glycero-D-manno-heptose 7-phosphate at the C-1 position to selectively form D-glycero-beta-D-manno-heptose-1,7-bisphosphate. Functionally, catalyzes the ADP transfer from ATP to D-glycero-beta-D-manno-heptose 1-phosphate, yielding ADP-D-glycero-beta-D-manno-heptose. This Shewanella loihica (strain ATCC BAA-1088 / PV-4) protein is Bifunctional protein HldE.